The sequence spans 227 residues: GTP:AMP phosphotransferase AK3, mitochondrial (227 aa).

GTP contacts are provided by glycine 17, glycine 19, lysine 20, glycine 21, and threonine 22. An N6-succinyllysine modification is found at lysine 20. Position 29 is an N6-acetyllysine; alternate (lysine 29). Lysine 29 is subject to N6-succinyllysine; alternate. Residue lysine 34 is modified to N6-acetyllysine. A Phosphoserine modification is found at serine 37. Residues serine 37–isoleucine 66 form an NMP region. Residues serine 38 and arginine 43 each contribute to the AMP site. Lysine 57 bears the N6-succinyllysine mark. An N6-acetyllysine; alternate mark is found at lysine 64 and lysine 80. 2 positions are modified to N6-succinyllysine; alternate: lysine 64 and lysine 80. AMP is bound at residue lysine 64. AMP is bound by residues glycine 91, arginine 94, and glutamine 98. The interval alanine 127 to aspartate 164 is LID. GTP contacts are provided by arginine 128, tyrosine 138, asparagine 139, arginine 161, and arginine 172. N6-acetyllysine; alternate is present on residues lysine 174 and lysine 189. Lysine 174 and lysine 189 each carry N6-succinyllysine; alternate. Threonine 201 lines the GTP pocket. Lysine 203 is modified (N6-acetyllysine).

The protein belongs to the adenylate kinase family. AK3 subfamily. Monomer.

The protein localises to the mitochondrion matrix. The catalysed reaction is a ribonucleoside 5'-triphosphate + AMP = a ribonucleoside 5'-diphosphate + ADP. The enzyme catalyses GTP + AMP = GDP + ADP. It catalyses the reaction ITP + AMP = IDP + ADP. Functionally, mitochondrial adenylate kinase with a specific GTP:AMP phosphotransferase activity. Could also use ITP as phosphate donor. Its physiological function is to recycle GTP into GDP which is necessary for the TCA cycle in the mitochondrial matrix. The sequence is that of GTP:AMP phosphotransferase AK3, mitochondrial from Rattus norvegicus (Rat).